Here is a 59-residue protein sequence, read N- to C-terminus: UPF0434 protein plu1633 (59 aa).

The protein belongs to the UPF0434 family.

This chain is UPF0434 protein plu1633, found in Photorhabdus laumondii subsp. laumondii (strain DSM 15139 / CIP 105565 / TT01) (Photorhabdus luminescens subsp. laumondii).